We begin with the raw amino-acid sequence, 154 residues long: MSVTDVSGLSQLGTKVDTPESPEKAVLEKVPNGNAGTDYVVRFTAPEFTSLCPMTGQPDFAHIVIDYIPGDFLVESKSLKLFLQSFRNHGAFHEDCSVYIAKRLVELLQPKWLRIGAYWYPRGGIPIDVFWQTGAAPEGVWLPDQGVAPYRGRG.

The span at methionine 1–glycine 13 shows a compositional bias: polar residues. Residues methionine 1–valine 30 form a disordered region. The segment covering aspartate 17–leucine 27 has biased composition (basic and acidic residues). The Thioimide intermediate role is filled by cysteine 52. The active-site Proton donor is the aspartate 59. Residues valine 74–serine 76 and histidine 93–glutamate 94 contribute to the substrate site.

This sequence belongs to the GTP cyclohydrolase I family. QueF type 1 subfamily.

The protein resides in the cytoplasm. It catalyses the reaction 7-aminomethyl-7-carbaguanine + 2 NADP(+) = 7-cyano-7-deazaguanine + 2 NADPH + 3 H(+). It functions in the pathway tRNA modification; tRNA-queuosine biosynthesis. Functionally, catalyzes the NADPH-dependent reduction of 7-cyano-7-deazaguanine (preQ0) to 7-aminomethyl-7-deazaguanine (preQ1). In Agrobacterium fabrum (strain C58 / ATCC 33970) (Agrobacterium tumefaciens (strain C58)), this protein is NADPH-dependent 7-cyano-7-deazaguanine reductase.